The chain runs to 90 residues: Small ribosomal subunit protein uS15 (90 aa).

Belongs to the universal ribosomal protein uS15 family. In terms of assembly, part of the 30S ribosomal subunit. Forms a bridge to the 50S subunit in the 70S ribosome, contacting the 23S rRNA.

In terms of biological role, one of the primary rRNA binding proteins, it binds directly to 16S rRNA where it helps nucleate assembly of the platform of the 30S subunit by binding and bridging several RNA helices of the 16S rRNA. Forms an intersubunit bridge (bridge B4) with the 23S rRNA of the 50S subunit in the ribosome. In Helicobacter pylori (strain Shi470), this protein is Small ribosomal subunit protein uS15.